We begin with the raw amino-acid sequence, 67 residues long: Beta-defensin 103A (67 aa).

An N-terminal signal peptide occupies residues 1–22 (MRIHYLLFTLLFLFLVPVPGHG). Cystine bridges form between Cys33–Cys62, Cys40–Cys55, and Cys45–Cys63.

It belongs to the beta-defensin family.

It localises to the secreted. Exhibits antimicrobial activity against Gram-positive and Gram-negative bacteria. In Gorilla gorilla gorilla (Western lowland gorilla), this protein is Beta-defensin 103A (DEFB103A).